A 160-amino-acid chain; its full sequence is 6,7-dimethyl-8-ribityllumazine synthase (160 aa).

Residues phenylalanine 22, 57–59 (AVE), and 81–83 (AVI) each bind 5-amino-6-(D-ribitylamino)uracil. Residue 86–87 (GT) participates in (2S)-2-hydroxy-3-oxobutyl phosphate binding. The active-site Proton donor is the histidine 89. A 5-amino-6-(D-ribitylamino)uracil-binding site is contributed by phenylalanine 114. Position 128 (arginine 128) interacts with (2S)-2-hydroxy-3-oxobutyl phosphate.

This sequence belongs to the DMRL synthase family. In terms of assembly, forms an icosahedral capsid composed of 60 subunits, arranged as a dodecamer of pentamers.

The catalysed reaction is (2S)-2-hydroxy-3-oxobutyl phosphate + 5-amino-6-(D-ribitylamino)uracil = 6,7-dimethyl-8-(1-D-ribityl)lumazine + phosphate + 2 H2O + H(+). It participates in cofactor biosynthesis; riboflavin biosynthesis; riboflavin from 2-hydroxy-3-oxobutyl phosphate and 5-amino-6-(D-ribitylamino)uracil: step 1/2. In terms of biological role, catalyzes the formation of 6,7-dimethyl-8-ribityllumazine by condensation of 5-amino-6-(D-ribitylamino)uracil with 3,4-dihydroxy-2-butanone 4-phosphate. This is the penultimate step in the biosynthesis of riboflavin. This is 6,7-dimethyl-8-ribityllumazine synthase from Shewanella sediminis (strain HAW-EB3).